A 318-amino-acid chain; its full sequence is Protein IMPACT-A (318 aa).

The RWD domain maps to 14–116; that stretch reads DEVEALTSIY…EKIREFLLGK (103 aa). The tract at residues 296–318 is disordered; that stretch reads EESSKQTAKSKKVGKECKKKADH. Positions 308 to 318 are enriched in basic and acidic residues; the sequence is VGKECKKKADH.

It belongs to the IMPACT family. In terms of assembly, interacts with GCN1; prevents the interaction of GCN1 with EIF2AK4/GCN2 and inhibits EIF2AK4/GCN2 kinase activity. Interaction with RPL39; this interaction occurs in a GCN1-independent manner. Associates with ribosomes; this interaction occurs in a GCN1-independent manner. Associates with actin; this interaction occurs in a GCN1-independent manner.

It is found in the cytoplasm. Its function is as follows. Translational regulator that ensures constant high levels of translation upon a variety of stress conditions, such as amino acid starvation, UV-C irradiation, proteasome inhibitor treatment and glucose deprivation. Plays a role as a negative regulator of the EIF2AK4/GCN2 kinase activity; impairs GCN1-mediated EIF2AK4/GCN2 activation, and hence EIF2AK4/GCN2-mediated eIF-2-alpha phosphorylation and subsequent down-regulation of protein synthesis. Plays a role in differentiation of neuronal cells by stimulating neurite outgrowth. The sequence is that of Protein IMPACT-A (impact-A) from Xenopus tropicalis (Western clawed frog).